The chain runs to 245 residues: Small ribosomal subunit protein uS3 (245 aa).

Residues 38–106 (IRKYLNTRLA…EVQINIFEIK (69 aa)) form the KH type-2 domain. The disordered stretch occupies residues 225-245 (YEGSGDKSVKRRKRNGIKKNE). A compositionally biased stretch (basic residues) spans 233–245 (VKRRKRNGIKKNE).

The protein belongs to the universal ribosomal protein uS3 family. As to quaternary structure, part of the 30S ribosomal subunit. Forms a tight complex with proteins S10 and S14.

Its function is as follows. Binds the lower part of the 30S subunit head. Binds mRNA in the 70S ribosome, positioning it for translation. The protein is Small ribosomal subunit protein uS3 of Azobacteroides pseudotrichonymphae genomovar. CFP2.